Consider the following 171-residue polypeptide: Neuronal vesicle trafficking-associated protein 2 (171 aa).

The tract at residues 1-21 is disordered; sequence MVKLNSNPGEKGAKPPSVEDG. Residues 1–71 are Cytoplasmic-facing; sequence MVKLNSNPGE…FRVPKIAEFT (71 aa). A helical; Signal-anchor for type II membrane protein transmembrane segment spans residues 72–92; it reads VTILVSLALAFLACIVFLVVY. Over 93–171 the chain is Lumenal; that stretch reads KAFTYDHSCP…EPKPPKTQGH (79 aa).

This sequence belongs to the NSG family. As to expression, specifically expressed in neural and neuroendocrine tissues. Pituitary and less in adrenal gland and testis. Expressed in the hippocampus throughout development. Remains enriched in layer V cortical neurons during development. At P0, broadly expressed in the neocortex. Is down-regulated overall at P8 and P14, but remains relatively enriched in layer V. At P0 is lower expressed in the cerebellum. Expression remains low throughout development, and is undetectable by adulthood.

The protein resides in the membrane. It is found in the golgi apparatus. Its subcellular location is the trans-Golgi network membrane. It localises to the cell projection. The protein localises to the dendrite. The protein resides in the endosome membrane. It is found in the early endosome membrane. Its subcellular location is the late endosome membrane. It localises to the lysosome lumen. The protein localises to the cytoplasmic vesicle membrane. The protein resides in the golgi stack membrane. It is found in the endosome. Its subcellular location is the multivesicular body membrane. The protein is Neuronal vesicle trafficking-associated protein 2 of Mus musculus (Mouse).